We begin with the raw amino-acid sequence, 539 residues long: Tyrosine-protein kinase csk-1 (539 aa).

One can recognise an SH3 domain in the interval 43–110 (SPGNDVIVTR…HADCVVRING (68 aa)). The disordered stretch occupies residues 129–148 (PGAASTTSSTSSHHSTAANH). Over residues 131-146 (AASTTSSTSSHHSTAA) the composition is skewed to low complexity. One can recognise an SH2 domain in the interval 151-241 (WFHSMISREN…GLCHRLVTPI (91 aa)). The Protein kinase domain maps to 283–535 (IDVGDTIGHG…GQVLQRLTTI (253 aa)). ATP contacts are provided by residues 289–297 (IGHGEFGDV) and Lys-310. Residue Asp-403 is the Proton acceptor of the active site.

It belongs to the protein kinase superfamily. Tyr protein kinase family. CSK subfamily. Requires Mg(2+) as cofactor. Mn(2+) is required as a cofactor. In terms of tissue distribution, expressed predominantly in pharyngeal muscles in procorpus, metacorpus and terminal bulb. Expressed also in some neurons (ASE, ADF, AVA, AUA, RMDV and BAG) in the head region, anchor cell, vulva, cells around anus, body wall muscle and gondal distal tip cells.

It carries out the reaction L-tyrosyl-[protein] + ATP = O-phospho-L-tyrosyl-[protein] + ADP + H(+). Non-receptor tyrosine-protein kinase which plays a role in pharynx function by regulating pumping and the orientation of pharyngeal muscle fibers, independently of src-1 and src-2. May phosphorylate and thereby negatively regulate src-1 and src-2 activities. In Caenorhabditis elegans, this protein is Tyrosine-protein kinase csk-1.